The chain runs to 455 residues: Venom prothrombin activator hopsarin-D (455 aa).

The N-terminal stretch at 1-20 (MAPQLLLCLILTFLWSVPEA) is a signal peptide. The propeptide occupies 21-40 (ESNVFLKSKVANRFLQRTKR). In terms of domain architecture, Gla spans 41-86 (SNSLFEEIRPGNIERECIEEKCSKEEAREVFEDNEKTETFWNVYVD). Residues E46, E47, E54, E56, E59, E60, E65, E66, E69, E72, and E75 each carry the 4-carboxyglutamate modification. The cysteines at positions 57 and 62 are disulfide-linked. Residues 86 to 121 (DGDQCSSNPCHYHGTCKDGIGSYTCTCLPNYEGKNC) enclose the EGF-like 1; calcium-binding domain. 10 disulfide bridges follow: C90–C101, C95–C110, C112–C121, C129–C140, C136–C149, C151–C164, C172–C328, C236–C252, C376–C390, and C401–C429. The O-linked (Hex...) serine glycan is linked to S92. Residues 129–164 (CRAFNGNCWHFCKRVQSETQCSCAESYRLGVDGHSC) form the EGF-like 2 domain. Residues 182–209 (REASLPDFVQSQKATLLKKSDNPSPDIR) constitute a propeptide, activation peptide. In terms of domain architecture, Peptidase S1 spans 210-453 (IVNGMDSKLG…FIPWIKKIMS (244 aa)). Residue H251 is the Charge relay system of the active site. N254 carries N-linked (GlcNAc...) asparagine glycosylation. D308 serves as the catalytic Charge relay system. Residue S405 is the Charge relay system of the active site.

Belongs to the peptidase S1 family. Snake venom subfamily. As to quaternary structure, heterodimer of a light chain and a heavy chain; disulfide-linked. Post-translationally, the vitamin K-dependent, enzymatic carboxylation of some glutamate residues allows the modified protein to bind calcium. Expressed by the venom gland.

The protein resides in the secreted. It catalyses the reaction Selective cleavage of Arg-|-Thr and then Arg-|-Ile bonds in prothrombin to form thrombin.. Its function is as follows. Snake prothrombin activator that attacks the hemostatic system of prey. This protein is functionally similar to blood coagulation factor Xa. The procoagulant activity of hopsarin-D is approximately 10-fold lower than that of trocarin-D and FXa. The sequence is that of Venom prothrombin activator hopsarin-D from Hoplocephalus stephensii (Stephens's banded snake).